The following is a 361-amino-acid chain: MRVDLFDFDLPDERIALRPAEPRDSARLLVVDPDAESALSDHHVCDLPSFLRAGDALVFNDTKVIPAQLEGIRHRDGAGGQQVSATLHMRIGPSRWKAFAKPGKRIKEGDRIAFGHSGESCMIGSLDATVEEKGEAGEVTLAFDLSGPVLDEAIAAVGHIPLPPYIAAKRPEDERDRADYQTIYAREEGAVAAPTAGLHFTPALFEALDKAGIERHFVTLHVGAGTFLPVKADDTDDHKMHLESGYVSGEIAAGLNAVKARGGRIVCVGTTSLRLIESAAGESGEIKPWAGATGIFITPGYRFKAVDMLMTNFHLPRSTLFMLVSAFSGFETMHAAYKHAISTGYRFYSYGDASLLFRKDK.

It belongs to the QueA family. Monomer.

The protein localises to the cytoplasm. The catalysed reaction is 7-aminomethyl-7-carbaguanosine(34) in tRNA + S-adenosyl-L-methionine = epoxyqueuosine(34) in tRNA + adenine + L-methionine + 2 H(+). The protein operates within tRNA modification; tRNA-queuosine biosynthesis. In terms of biological role, transfers and isomerizes the ribose moiety from AdoMet to the 7-aminomethyl group of 7-deazaguanine (preQ1-tRNA) to give epoxyqueuosine (oQ-tRNA). This Rhizobium etli (strain ATCC 51251 / DSM 11541 / JCM 21823 / NBRC 15573 / CFN 42) protein is S-adenosylmethionine:tRNA ribosyltransferase-isomerase.